The primary structure comprises 402 residues: Phosphoglycerate kinase (402 aa).

Substrate-binding positions include 30–32 (DFN), R46, 70–73 (HLGR), R126, and R159. ATP contacts are provided by residues K210, E332, and 358–361 (GGDT).

The protein belongs to the phosphoglycerate kinase family. In terms of assembly, monomer.

The protein localises to the cytoplasm. It catalyses the reaction (2R)-3-phosphoglycerate + ATP = (2R)-3-phospho-glyceroyl phosphate + ADP. It functions in the pathway carbohydrate degradation; glycolysis; pyruvate from D-glyceraldehyde 3-phosphate: step 2/5. The protein is Phosphoglycerate kinase of Helicobacter hepaticus (strain ATCC 51449 / 3B1).